Consider the following 304-residue polypeptide: MAPLAARRPACLLALLSVAAALFLTPTALAAGGKTGQVTVFWGRNKAEGSLREACDSGMYTMVTMSFLDVFGANGKYHLDLSGHDLSSVGADIKHCQSKGVPVSLSIGGYGTGYSLPSNRSALDLFDHLWNSYFGGSKPSVPRPFGDAWLDGVDLFLEHGTPADRYDVLALELAKHNIRGGPGKPLHLTATVRCGYPPAAHVGRALATGIFERVHVRTYESDKWCNQNLGWEGSWDKWTAAYPATRFYVGLTADDKSHQWVHPKNVYYGVAPVAQKKDNYGGIMLWDRYFDKQTNYSSLIKYYA.

A signal peptide spans 1-30 (MAPLAARRPACLLALLSVAAALFLTPTALA). Positions 36–304 (GQVTVFWGRN…NYSSLIKYYA (269 aa)) constitute a GH18 domain. The cysteines at positions 55 and 96 are disulfide-linked. N119 carries N-linked (GlcNAc...) asparagine glycosylation. E158 (proton donor) is an active-site residue. The interaction with fungal GH11 xylanase stretch occupies residues 178 to 184 (IRGGPGK). C194 and C225 form a disulfide bridge. The tract at residues 262–275 (HPKNVYYGVAPVAQ) is interaction with fungal GH10 xylanase. Residue N295 is glycosylated (N-linked (GlcNAc...) asparagine).

It belongs to the glycosyl hydrolase 18 family. Xylanase inhibitor subfamily. In terms of assembly, binds to fungal GH10 and GH11 xylanases. Also forms a ternary complex with barley alpha-amylase 1 (AMY1) and insoluble starch.

It is found in the secreted. In terms of biological role, fungal xylanase inhibitor. Possesses competitive inhibiting activity against fungal endo-1,4-beta-D-xylanases belonging to glycoside hydrolase family 10 (GH10) and family 11 (GH11). Possesses also inhibitory activity towards barley alpha-amylases. Binding to xylanases or amylases is necessary for inhibition activity. May function in plant defense against secreted fungal pathogen xylanases. Is similar to class III chitinases, but does not exhibit chitinase activity. The sequence is that of Xylanase inhibitor protein 1 from Triticum aestivum (Wheat).